A 190-amino-acid chain; its full sequence is LOB domain-containing protein 1 (190 aa).

Residues 1–11 are compositionally biased toward polar residues; sequence MESKSDASVAT. The interval 1 to 27 is disordered; that stretch reads MESKSDASVATTPIISSSSSPPPSLSP. The LOB domain occupies 32–133; it reads SPCAACKILR…AQLAKAQVEM (102 aa).

Belongs to the LOB domain-containing protein family. Expressed in young shoots, roots, stems, leaves and flowers.

This Arabidopsis thaliana (Mouse-ear cress) protein is LOB domain-containing protein 1 (LBD1).